The primary structure comprises 545 residues: MKSSLALALLVGGAIASGPQQQVLREPVDHPQAAETPLQKISDIFGHLSEQAGNVWEDVMDKFPDTLMDAITQTPPPKKHNRRPDSEWDHIVRGSDVQAVWVEGDAGEKHRKVGGRLDTYDLRVKAVDPSNLGVDTVKQYSGYLDDNENDKHLFYWFFESRNDPKNDPVVLWLNGGPGCSSLTGLFLELGPSSITKQLKVEYNEFSWNSNASVIFLDQPVNVGYSYSSSSVSNTQAAAKDVYALLTLFFEQFPEYSRQDFHIAGESYAGHYIPVFASEIMSHSHRNINLKSILVGNGLTDPLSQYPHYRPMACGEGGYPAVLSSSSCQAMDNALPRCLAMIQACYNTESRWSCVPASIYCNNALIGPYQRSGMNPYDVRSKCEGGSLCYTQLDDISKYLNRNAVMESLGAEVSSYESCNMDINRNFLFQGDWMQPYMRVVPTLLAQMPVLIYAGDADFICNWLGNKAWTEALEYPGHNEFAAAEMKNLTSQNHEDVRVIGQVKSAGNFTFMRLFGGGHMVPMDQPEASLEFFNRWLGGEWSDKSP.

The first 18 residues, 1–18, serve as a signal peptide directing secretion; that stretch reads MKSSLALALLVGGAIASG. The propeptide occupies 19 to 125; it reads PQQQVLREPV…RLDTYDLRVK (107 aa). 5 disulfides stabilise this stretch: cysteine 179–cysteine 418, cysteine 313–cysteine 327, cysteine 337–cysteine 360, cysteine 344–cysteine 353, and cysteine 382–cysteine 388. N-linked (GlcNAc...) asparagine glycosylation occurs at asparagine 210. Residue serine 266 is part of the active site. Aspartate 457 is a catalytic residue. 2 N-linked (GlcNAc...) asparagine glycosylation sites follow: asparagine 487 and asparagine 507. Residue histidine 518 is part of the active site.

It belongs to the peptidase S10 family.

It is found in the vacuole. It carries out the reaction Release of a C-terminal amino acid with broad specificity.. Functionally, vacuolar carboxypeptidase involved in degradation of small peptides. Digests preferentially peptides containing an aliphatic or hydrophobic residue in P1' position, as well as methionine, leucine or phenylalanine in P1 position of ester substrate. This is Carboxypeptidase Y homolog A (CPYA) from Ajellomyces capsulatus (strain NAm1 / WU24) (Darling's disease fungus).